The sequence spans 285 residues: Transmembrane protein 158 (285 aa).

The signal sequence occupies residues 1-20; sequence MLPLLAALLAAACPLPPARG. A disordered region spans residues 20–43; sequence GGATDAPGLSGTPPNASANASFTG. The segment covering 31–43 has biased composition (polar residues); sequence TPPNASANASFTG. Residue N73 is glycosylated (N-linked (GlcNAc...) asparagine). The next 2 membrane-spanning stretches (helical) occupy residues 215–235 and 263–283; these read LVIV…IAGF and AAAA…SGVA.

This sequence belongs to the TMEM158 family. Post-translationally, N-glycosylated. Detected only in the brain.

The protein resides in the membrane. Functionally, receptor for brain injury-derived neurotrophic peptide (BINP), a synthetic 13-mer peptide. This is Transmembrane protein 158 (Tmem158) from Rattus norvegicus (Rat).